A 252-amino-acid polypeptide reads, in one-letter code: 5'-nucleotidase SurE (252 aa).

A divalent metal cation contacts are provided by Asp-8, Asp-9, Ser-40, and Asn-93.

Belongs to the SurE nucleotidase family. It depends on a divalent metal cation as a cofactor.

It localises to the cytoplasm. It carries out the reaction a ribonucleoside 5'-phosphate + H2O = a ribonucleoside + phosphate. In terms of biological role, nucleotidase that shows phosphatase activity on nucleoside 5'-monophosphates. The polypeptide is 5'-nucleotidase SurE (Erythrobacter litoralis (strain HTCC2594)).